Reading from the N-terminus, the 325-residue chain is Peroxidase 68 (325 aa).

The first 28 residues, 1–28 (MECYEQSRQRAAFVVLLFIVMLGSQAQA), serve as a signal peptide directing secretion. At Gln-29 the chain carries Pyrrolidone carboxylic acid. Intrachain disulfides connect Cys-39/Cys-119, Cys-72/Cys-77, Cys-125/Cys-321, and Cys-205/Cys-230. His-70 acts as the Proton acceptor in catalysis. Positions 71, 74, 76, 78, and 80 each coordinate Ca(2+). Asn-99 carries N-linked (GlcNAc...) asparagine glycosylation. Pro-168 is a binding site for substrate. His-198 serves as a coordination point for heme b. A Ca(2+)-binding site is contributed by Thr-199. The N-linked (GlcNAc...) asparagine glycan is linked to Asn-214. The Ca(2+) site is built by Asp-245, Thr-248, and Asp-253.

Belongs to the peroxidase family. Classical plant (class III) peroxidase subfamily. The cofactor is heme b. Ca(2+) is required as a cofactor.

It is found in the secreted. The catalysed reaction is 2 a phenolic donor + H2O2 = 2 a phenolic radical donor + 2 H2O. Functionally, removal of H(2)O(2), oxidation of toxic reductants, biosynthesis and degradation of lignin, suberization, auxin catabolism, response to environmental stresses such as wounding, pathogen attack and oxidative stress. These functions might be dependent on each isozyme/isoform in each plant tissue. The chain is Peroxidase 68 (PER68) from Arabidopsis thaliana (Mouse-ear cress).